The chain runs to 423 residues: Glucose-1-phosphate adenylyltransferase (423 aa).

Alpha-D-glucose 1-phosphate-binding positions include Tyr-108, Gly-173, 188–189, and Ser-207; that span reads EK.

The protein belongs to the bacterial/plant glucose-1-phosphate adenylyltransferase family. Homotetramer.

It carries out the reaction alpha-D-glucose 1-phosphate + ATP + H(+) = ADP-alpha-D-glucose + diphosphate. It participates in glycan biosynthesis; glycogen biosynthesis. Its function is as follows. Involved in the biosynthesis of ADP-glucose, a building block required for the elongation reactions to produce glycogen. Catalyzes the reaction between ATP and alpha-D-glucose 1-phosphate (G1P) to produce pyrophosphate and ADP-Glc. The chain is Glucose-1-phosphate adenylyltransferase from Francisella tularensis subsp. mediasiatica (strain FSC147).